A 271-amino-acid chain; its full sequence is 3-methyl-2-oxobutanoate hydroxymethyltransferase (271 aa).

Mg(2+)-binding residues include D52 and D91. Residues 52–53 (DS), D91, and K121 each bind 3-methyl-2-oxobutanoate. E123 provides a ligand contact to Mg(2+). Residue E189 is the Proton acceptor of the active site.

It belongs to the PanB family. Homodecamer; pentamer of dimers. It depends on Mg(2+) as a cofactor.

The protein localises to the cytoplasm. It catalyses the reaction 3-methyl-2-oxobutanoate + (6R)-5,10-methylene-5,6,7,8-tetrahydrofolate + H2O = 2-dehydropantoate + (6S)-5,6,7,8-tetrahydrofolate. The protein operates within cofactor biosynthesis; (R)-pantothenate biosynthesis; (R)-pantoate from 3-methyl-2-oxobutanoate: step 1/2. Catalyzes the reversible reaction in which hydroxymethyl group from 5,10-methylenetetrahydrofolate is transferred onto alpha-ketoisovalerate to form ketopantoate. This is 3-methyl-2-oxobutanoate hydroxymethyltransferase from Acidothermus cellulolyticus (strain ATCC 43068 / DSM 8971 / 11B).